Reading from the N-terminus, the 563-residue chain is Ribulokinase (563 aa).

It belongs to the ribulokinase family.

The enzyme catalyses D-ribulose + ATP = D-ribulose 5-phosphate + ADP + H(+). It carries out the reaction L-ribulose + ATP = L-ribulose 5-phosphate + ADP + H(+). It participates in carbohydrate degradation; L-arabinose degradation via L-ribulose; D-xylulose 5-phosphate from L-arabinose (bacterial route): step 2/3. The protein is Ribulokinase of Mycolicibacterium smegmatis (Mycobacterium smegmatis).